We begin with the raw amino-acid sequence, 468 residues long: Glutathione reductase (468 aa).

FAD-binding residues include Ser17 and Gly18. Ser17 serves as a coordination point for glutathione. Arg24 contacts glutathione. 4 residues coordinate FAD: Glu38, Thr45, Cys46, and Lys54. Cys46 and Cys51 are joined by a disulfide. A glutathione-binding site is contributed by Tyr103. Ala119 provides a ligand contact to FAD. 6 residues coordinate NADP(+): Ala185, Ile188, Glu191, Arg208, Arg214, and Gly276. Position 317 (Asp317) interacts with FAD. Glu323 serves as a coordination point for NADP(+). Thr325 is a binding site for FAD. Arg333 serves as a coordination point for glutathione. Val358 lines the NADP(+) pocket. Lys410 contacts glutathione. His457 lines the FAD pocket. His457 acts as the Proton acceptor in catalysis.

This sequence belongs to the class-I pyridine nucleotide-disulfide oxidoreductase family. Homodimer. Requires FAD as cofactor.

It is found in the cytoplasm. It localises to the mitochondrion. It catalyses the reaction 2 glutathione + NADP(+) = glutathione disulfide + NADPH + H(+). Its function is as follows. Catalyzes the reduction of glutathione disulfide (GSSG) to reduced glutathione (GSH). Constitutes the major mechanism to maintain a high GSH:GSSG ratio in the cytosol. The polypeptide is Glutathione reductase (gtr-1) (Neurospora crassa (strain ATCC 24698 / 74-OR23-1A / CBS 708.71 / DSM 1257 / FGSC 987)).